We begin with the raw amino-acid sequence, 451 residues long: Glyceraldehyde-3-phosphate dehydrogenase B, chloroplastic (451 aa).

The disordered stretch occupies residues 1-25; the sequence is MATHAALASTRIPTNTRFPSKTSHS. Residues 1-84 constitute a chloroplast transit peptide; it reads MATHAALAST…STAVKGVTVA (84 aa). Polar residues predominate over residues 11 to 25; the sequence is RIPTNTRFPSKTSHS. NADP(+)-binding positions include 95-96, Asp119, and Arg164; that span reads RI. Residues 238–240, Thr269, Arg284, 297–298, and Arg320 each bind D-glyceraldehyde 3-phosphate; these read SCT and TG. The active-site Nucleophile is the Cys239. Asn403 provides a ligand contact to NADP(+).

This sequence belongs to the glyceraldehyde-3-phosphate dehydrogenase family. As to quaternary structure, tetramer of either four A chains (GAPDH 2) or two A and two B chains (GAPDH 1).

It is found in the plastid. The protein resides in the chloroplast. It catalyses the reaction D-glyceraldehyde 3-phosphate + phosphate + NADP(+) = (2R)-3-phospho-glyceroyl phosphate + NADPH + H(+). It participates in carbohydrate biosynthesis; Calvin cycle. This is Glyceraldehyde-3-phosphate dehydrogenase B, chloroplastic (GAPB) from Pisum sativum (Garden pea).